The following is a 514-amino-acid chain: Alpha-1B adrenergic receptor (514 aa).

Residues 1-45 (MNPDLDTGHNTSAPAHWGELKDANFTGPNQTSSNSTLPQLDVTRA) are Extracellular-facing. 4 N-linked (GlcNAc...) asparagine glycosylation sites follow: Asn10, Asn24, Asn29, and Asn34. Residues 46–69 (ISVGCLGAFILFAIVGNILVILSV) traverse the membrane as a helical segment. The Cytoplasmic segment spans residues 70–82 (ACNRHLRTPTNYF). The helical transmembrane segment at 83–104 (IVNLAIADLLLSFTDLPFSATL) threads the bilayer. Residues 105–114 (EVLGYWVLGR) lie on the Extracellular side of the membrane. The helical transmembrane segment at 115 to 140 (IFCDIWAAVDVLCCTASILSLCAISI) threads the bilayer. Cys117 and Cys194 are oxidised to a cystine. The Cytoplasmic portion of the chain corresponds to 141–160 (DRYIGVRYSLQYPTLVTRRK). The helical transmembrane segment at 161-183 (AILALLSVWVLSTVISIGPLLGW) threads the bilayer. The Extracellular segment spans residues 184 to 200 (KEPAPNDDKECGVTEEP). A helical membrane pass occupies residues 201 to 223 (FYALFSSLGSFYIPLAVILVMYC). The Cytoplasmic segment spans residues 224-294 (RVYIVAKRTT…FSREKKAAKT (71 aa)). Position 263 is a phosphothreonine (Thr263). Residues 295–318 (LGIVVGMFILCWLPFFIALPLGSL) traverse the membrane as a helical segment. At 319–325 (FSTLKPP) the chain is on the extracellular side. Residues 326-350 (DAVFKVVFWLGYFNSCLNPIIYPCS) traverse the membrane as a helical segment. Topologically, residues 351–514 (SKEFKRAFMR…SNMPLAPGHF (164 aa)) are cytoplasmic. Cys364 carries S-palmitoyl cysteine lipidation. Positions 367 to 377 (RGGRRRRRRRR) match the Nuclear localization signal motif. 2 disordered regions span residues 391 to 429 (GGSL…GYLG) and 473 to 514 (LGEP…PGHF). Residues 409 to 423 (SCMSGSQRTLPSASP) are compositionally biased toward polar residues.

The protein belongs to the G-protein coupled receptor 1 family. Adrenergic receptor subfamily. ADRA1B sub-subfamily. In terms of assembly, homo- and heterooligomer. Heterooligomerizes with ADRA1B homooligomers in cardiac myocytes. Interacts with CAVIN4.

It is found in the nucleus membrane. Its subcellular location is the cell membrane. The protein localises to the cytoplasm. It localises to the membrane. The protein resides in the caveola. In terms of biological role, this alpha-adrenergic receptor mediates its action by association with G proteins that activate a phosphatidylinositol-calcium second messenger system. Its effect is mediated by G(q) and G(11) proteins. Nuclear ADRA1A-ADRA1B heterooligomers regulate phenylephrine (PE)-stimulated ERK signaling in cardiac myocytes. This Mus musculus (Mouse) protein is Alpha-1B adrenergic receptor (Adra1b).